The following is a 217-amino-acid chain: 3-demethoxyubiquinol 3-hydroxylase (217 aa).

The Fe cation site is built by Glu-66, Glu-96, His-99, Glu-148, Glu-180, and His-183.

The protein belongs to the COQ7 family. Fe cation serves as cofactor.

The protein localises to the cell membrane. The enzyme catalyses a 5-methoxy-2-methyl-3-(all-trans-polyprenyl)benzene-1,4-diol + AH2 + O2 = a 3-demethylubiquinol + A + H2O. It functions in the pathway cofactor biosynthesis; ubiquinone biosynthesis. Functionally, catalyzes the hydroxylation of 2-nonaprenyl-3-methyl-6-methoxy-1,4-benzoquinol during ubiquinone biosynthesis. This chain is 3-demethoxyubiquinol 3-hydroxylase, found in Xanthomonas euvesicatoria pv. vesicatoria (strain 85-10) (Xanthomonas campestris pv. vesicatoria).